The following is a 457-amino-acid chain: Neuropeptide receptor npr-1 (457 aa).

At 1 to 22 (MEVENFTDCQVYWKVYPDPSQS) the chain is on the extracellular side. A helical membrane pass occupies residues 23 to 43 (IYAIVPFLTVYLFLFFLGLFG). The Cytoplasmic portion of the chain corresponds to 44–62 (NVTLIYVTCSHKALLSVQN). The helical transmembrane segment at 63–83 (IFILNLAASDCMMCILSLPIT) threads the bilayer. Residues 84 to 100 (PITNVYKNWYFGNLLCH) lie on the Extracellular side of the membrane. Cysteine 99 and cysteine 178 form a disulfide bridge. The chain crosses the membrane as a helical span at residues 101–121 (LIPCIQGISIFVCTFSLGAIA). At 122–140 (LDRYILVVRPHSTPLSQRG) the chain is on the cytoplasmic side. A helical membrane pass occupies residues 141–161 (AFLTTVLLWILSFVVTLPYAF). The Extracellular portion of the chain corresponds to 162–193 (NMQMIEYTEERICGYFCTEKWESAKSRRAYTM). The chain crosses the membrane as a helical span at residues 194–214 (IVMLAQFVVPFAVMAFCYANI). Residues 215–279 (VSVLSKRAQT…LQNRRTTSIL (65 aa)) are Cytoplasmic-facing. Residues 280–300 (VTMVVWFGITWLPHNVISLII) traverse the membrane as a helical segment. The Extracellular segment spans residues 301–324 (EYDDTQSFFRLYGRDDYDISYLLN). Residues 325-345 (LFTHSIAMSNNVLNPVLYAWL) traverse the membrane as a helical segment. Residues 346-457 (NPSFRQLVIK…IEFSVNDTLV (112 aa)) are Cytoplasmic-facing.

It belongs to the G-protein coupled receptor 1 family. As to expression, expressed in neurons, including neurons in the head, the ventral nerve cord, and the preanal ganglion.

It localises to the membrane. G-protein coupled receptor for FARP(FMRFamide related peptide) neuropeptides. Activated by FARP neuropeptides flp-18 and flp-21. Plays a role in modulating social and feeding behavior. Required to modulate locomotion quiescence during the sleep-like state called lethargus, which occurs during molting between larval and adult stages, in part by regulating touch sensitivity. The chain is Neuropeptide receptor npr-1 from Caenorhabditis elegans.